Reading from the N-terminus, the 258-residue chain is Tryptophan synthase alpha chain (258 aa).

Active-site proton acceptor residues include Glu-52 and Asp-63.

Belongs to the TrpA family. Tetramer of two alpha and two beta chains.

The catalysed reaction is (1S,2R)-1-C-(indol-3-yl)glycerol 3-phosphate + L-serine = D-glyceraldehyde 3-phosphate + L-tryptophan + H2O. The protein operates within amino-acid biosynthesis; L-tryptophan biosynthesis; L-tryptophan from chorismate: step 5/5. Functionally, the alpha subunit is responsible for the aldol cleavage of indoleglycerol phosphate to indole and glyceraldehyde 3-phosphate. This Streptococcus pneumoniae serotype 2 (strain D39 / NCTC 7466) protein is Tryptophan synthase alpha chain.